Reading from the N-terminus, the 555-residue chain is Carboxysome assembly protein CcmM (555 aa).

The segment at 1–209 (MAVRSTAAPP…CIAPLRNDQV (209 aa)) is has carbonic anhydrase (CA) activity. Glutamate 56 (proton donor/acceptor) is an active-site residue. 3 residues coordinate Zn(2+): histidine 75, histidine 102, and histidine 107. A disulfide bridge connects residues cysteine 194 and cysteine 200. The rbcS-like repeat 1, SSUL1 stretch occupies residues 223 to 315 (SSEVASNSLG…RVLETIIQRP (93 aa)). Disordered stretches follow at residues 323-351 (TSFKAPASNTNGNGSYHSNGNGNGYSNGA) and 441-464 (NGQVAPSSSPRTVVSASSASSGTA). Composition is skewed to low complexity over residues 330–351 (SNTNGNGSYHSNGNGNGYSNGA) and 445–464 (APSSSPRTVVSASSASSGTA). The rbcS-like repeat 2, SSUL2 stretch occupies residues 347-440 (YSNGATSGKV…RVLESIIQRP (94 aa)). The segment at 460-555 (SSGTATATAT…RVLETIIQRP (96 aa)) is rbcS-like repeat 3, SSUL3.

Belongs to the gamma-class carbonic anhydrase family. In terms of assembly, probable homotrimer; zinc is bound between adjacent monomers. Full length protein (M58) interacts with CcmN. The C-terminal RbcS-like domains (SSUL) bind to holo-RuBisCO, as does the M35 short form. It depends on Zn(2+) as a cofactor. In terms of processing, the first amino acid of the short form (equivalent to Val-226) is not seen in Edman degradation, while Ser-230 may be post-translationally modified. Migrates in gels as 2 about equal forms of about 60 and 35 kDa (called M58 and M35). They are probably the result of alternative translation initiation.

It localises to the carboxysome. Its subcellular location is the cytoplasm. The enzyme catalyses hydrogencarbonate + H(+) = CO2 + H2O. Carbonic anhydrase (CA) activity is probably under redox control to remain inactive in the cytoplasm. Carbonic anhydrase (CA) activity of full-length protein and N-terminal fragment is inhibited by ethoxyzolamide. N-terminal fragment CA activity is activated under oxidizing conditions and inhibited under reducing conditions. In terms of biological role, functions as a scaffold protein for the assembly of beta-carboxysomes, initiates carboxysome assembly by coalescing RuBisCO (ribulose bisphosphate carboxylase, rbcL-rbcS). Produced as a full-length (M58) and a short form (M35), possibly by alternative translation initiation; probably both forms are required for correct carboxysome assembly and growth. In this strain both forms are equally abundant. Its function is as follows. A moderately active carbonic anhydrase that catalyzes the reversible hydration of carbon dioxide. Essential to photosynthetic carbon dioxide fixation, supplies CO(2) to ribulose bisphosphate carboxylase (RuBisCO) in the carboxysome. Also hydrolyzes COS. Beta-carboxysome assembly initiates when soluble RuBisCO is condensed into a liquid matrix in a pre-carboxysome by the RbcS-like domains of probably both forms of CcmM. CcmN interacts with the N-terminus of full length CcmM, and then recruits the shell proteins (CcmK) via CcmN's encapsulation peptide. Shell formation requires both CcmK proteins and CcmO. CcmL caps the otherwise elongated carboxysome. Once fully encapsulated carboxysomes are formed, they migrate within the cell probably via interactions with the cytoskeleton. This Nostoc sp. (strain PCC 7120 / SAG 25.82 / UTEX 2576) protein is Carboxysome assembly protein CcmM.